The primary structure comprises 226 residues: Transcription repressor OFP12 (226 aa).

A compositionally biased stretch (low complexity) spans 68–87; it reads SSTFTASTSTAANSSSSSAS. The interval 68–104 is disordered; it reads SSTFTASTSTAANSSSSSASYDDSDNYGFAPDDDSPP. One can recognise an OVATE domain in the interval 152–217; it reads VKHYVQSPDP…IRAFADILVS (66 aa).

As to quaternary structure, interacts with KNAT1, KNAT2, KNAT3 and KNAT4. In terms of tissue distribution, expressed in roots, shoots, stems, flower buds and siliques.

It is found in the nucleus. Its function is as follows. Transcriptional repressor that regulates multiple aspects of plant growth and development through the regulation of BEL1-LIKE (BLH) and KNOX TALE (KNAT) homeodomain transcription factors. The chain is Transcription repressor OFP12 (OFP12) from Arabidopsis thaliana (Mouse-ear cress).